Reading from the N-terminus, the 84-residue chain is Large ribosomal subunit protein uL29 (84 aa).

The protein belongs to the universal ribosomal protein uL29 family.

This Mycoplasma mobile (strain ATCC 43663 / 163K / NCTC 11711) (Mesomycoplasma mobile) protein is Large ribosomal subunit protein uL29.